Consider the following 183-residue polypeptide: Large ribosomal subunit protein uL6 (183 aa).

It belongs to the universal ribosomal protein uL6 family. Part of the 50S ribosomal subunit.

In terms of biological role, this protein binds to the 23S rRNA, and is important in its secondary structure. It is located near the subunit interface in the base of the L7/L12 stalk, and near the tRNA binding site of the peptidyltransferase center. The sequence is that of Large ribosomal subunit protein uL6 from Mycoplasmoides gallisepticum (strain R(low / passage 15 / clone 2)) (Mycoplasma gallisepticum).